The following is an 85-amino-acid chain: Protein AC4 (85 aa).

A lipid anchor (N-myristoyl glycine; by host) is attached at glycine 2.

This sequence belongs to the geminiviridae protein AC4/C4 family. In terms of assembly, interacts with Arabidopsis thaliana ASK7/ASK-eta and ASK6/ASK-zeta proteins. In terms of processing, phosphorylated by Arabidopsis thaliana ASK7/ASK-eta mainly on threonine and serine residues.

It is found in the host cell membrane. Its function is as follows. Pathogenicity determinant. May act as a suppressor of RNA-mediated gene silencing, also known as post-transcriptional gene silencing (PTGS), a mechanism of plant viral defense that limits the accumulation of viral RNAs. May repress the AL61 promoter. The protein is Protein AC4 of Solanum lycopersicum (Tomato).